The sequence spans 155 residues: DNA-binding protein inhibitor ID-1 (155 aa).

Residues 53–105 (LPALLDEQQVNVLLYDMNGCYSRLKELVPTLPQNRKVSKVEILQHVIDYIRDL) enclose the bHLH domain. Positions 98–111 (VIDYIRDLQLELNS) match the Nuclear export signal motif.

Heterodimer with other HLH proteins. Interacts with COPS5, IFI204, GATA4 and NKX2-5. Interacts with CLOCK and BMAL1.

The protein localises to the cytoplasm. The protein resides in the nucleus. Transcriptional regulator (lacking a basic DNA binding domain) which negatively regulates the basic helix-loop-helix (bHLH) transcription factors by forming heterodimers and inhibiting their DNA binding and transcriptional activity. Implicated in regulating a variety of cellular processes, including cellular growth, senescence, differentiation, apoptosis, angiogenesis, and neoplastic transformation. Inhibits skeletal muscle and cardiac myocyte differentiation. Regulates the circadian clock by repressing the transcriptional activator activity of the CLOCK-BMAL1 heterodimer. The sequence is that of DNA-binding protein inhibitor ID-1 (ID1) from Homo sapiens (Human).